Consider the following 217-residue polypeptide: Large ribosomal subunit protein uL1 (217 aa).

Residue lysine 122 is modified to N6,N6-dimethyllysine; alternate. Lysine 122 is subject to N6-methyllysine; alternate.

It belongs to the universal ribosomal protein uL1 family.

The protein is Large ribosomal subunit protein uL1 (rpl10a) of Dictyostelium discoideum (Social amoeba).